The primary structure comprises 664 residues: Prelamin-A/C (664 aa).

M1 carries the N-acetylmethionine modification. Residues 1–25 (METPSQRRATRSGAQASSTPLSPTR) are disordered. The interval 1–33 (METPSQRRATRSGAQASSTPLSPTRITRLQEKE) is head. Residues 1-130 (METPSQRRAT…TKKEGDLIAA (130 aa)) form an interaction with MLIP region. T3 carries the post-translational modification Phosphothreonine. S5 is modified (phosphoserine). A Phosphothreonine modification is found at T10. Residues S12 and S18 each carry the phosphoserine modification. T19 carries the post-translational modification Phosphothreonine. Phosphoserine; by CDK1 is present on S22. The 357-residue stretch at 31–387 (EKEDLQELND…KLLEGEEERL (357 aa)) folds into the IF rod domain. K32 is modified (N6-acetyllysine; alternate). K32 is modified (N6-succinyllysine; alternate). A Glycyl lysine isopeptide (Lys-Gly) (interchain with G-Cter in SUMO2); alternate cross-link involves residue K32. The segment at 34–70 (DLQELNDRLAVYIDRVRSLETENAGLRLRITESEEVV) is coil 1A. S51, S66, and S71 each carry phosphoserine. A linker 1 region spans residues 71–80 (SREVSGIKAA). K78 and K97 each carry N6-acetyllysine. Residues 81 to 218 (YEAELGDARK…NIYSEELRET (138 aa)) form a coil 1B region. K97 is covalently cross-linked (Glycyl lysine isopeptide (Lys-Gly) (interchain with G-Cter in SUMO2)). At S107 the chain carries Phosphoserine. N6-acetyllysine is present on residues K108, K114, K123, K135, K144, and K155. At K171 the chain carries N6-acetyllysine; alternate. Residue K171 is modified to N6-succinyllysine; alternate. Residue K171 forms a Glycyl lysine isopeptide (Lys-Gly) (interchain with G-Cter in SUMO2); alternate linkage. N6-acetyllysine is present on residues K180, K201, and K208. K201 is covalently cross-linked (Glycyl lysine isopeptide (Lys-Gly) (interchain with G-Cter in SUMO2); alternate). K201 participates in a covalent cross-link: Glycyl lysine isopeptide (Lys-Gly) (interchain with G-Cter in SUMO); alternate. Residue K208 forms a Glycyl lysine isopeptide (Lys-Gly) (interchain with G-Cter in SUMO2) linkage. Phosphoserine is present on S212. Residues K219 and K233 each participate in a glycyl lysine isopeptide (Lys-Gly) (interchain with G-Cter in SUMO2) cross-link. Residues 219-242 (KRRHETRLVEIDNGKQREFESRLA) are linker 2. 4 positions are modified to N6-acetyllysine: K233, K260, K265, and K270. Residues 243–383 (DALQELRAQH…HAYRKLLEGE (141 aa)) form a coil 2 region. The tract at residues 259-331 (YKKELEKTYS…DLEDSLARER (73 aa)) is necessary and sufficient for the interaction with IFFO1. K260 is covalently cross-linked (Glycyl lysine isopeptide (Lys-Gly) (interchain with G-Cter in SUMO2); alternate). K270 is covalently cross-linked (Glycyl lysine isopeptide (Lys-Gly) (interchain with G-Cter in SUMO2); alternate). S277 carries the phosphoserine modification. At S282 the chain carries Phosphoserine; by ATR. S301 and S307 each carry phosphoserine. A Glycyl lysine isopeptide (Lys-Gly) (interchain with G-Cter in SUMO2); alternate cross-link involves residue K311. An N6-acetyllysine mark is found at K311, K316, and K341. Glycyl lysine isopeptide (Lys-Gly) (interchain with G-Cter in SUMO2) cross-links involve residues K366 and K378. Residues 384–442 (EERLRLSPSPTSQRSRGRASSHSSQTQGGGSVTKKRKLESTESRSSFSQHARTSGRVAV) form a disordered region. The tail stretch occupies residues 384 to 664 (EERLRLSPSP…TQSPQNCSIM (281 aa)). Residue S390 is modified to Phosphoserine. S392 bears the Phosphoserine; by CDK1 mark. Phosphoserine; by ATR is present on S395. Phosphoserine is present on residues S398, S403, S404, S406, S407, and S414. T416 is subject to Phosphothreonine. An N6-acetyllysine modification is found at K417. Residues K417 and K420 each participate in a glycyl lysine isopeptide (Lys-Gly) (interchain with G-Cter in SUMO2) cross-link. Positions 417–422 (KKRKLE) match the Nuclear localization signal motif. Phosphoserine occurs at positions 423, 426, 429, and 431. The span at 426–435 (SRSSFSQHAR) shows a compositional bias: polar residues. The LTD domain maps to 428 to 545 (SSFSQHARTS…EEVAMRKLVR (118 aa)). K450 is covalently cross-linked (Glycyl lysine isopeptide (Lys-Gly) (interchain with G-Cter in SUMO2); alternate). An N6-acetyllysine mark is found at K450 and K457. 2 positions are modified to phosphoserine: S458 and S463. Glycyl lysine isopeptide (Lys-Gly) (interchain with G-Cter in SUMO2) cross-links involve residues K470 and K486. K486 bears the N6-acetyllysine mark. A phosphothreonine mark is found at T496, T505, and T510. Phosphoserine is present on residues S533 and S546. The residue at position 548 (T548) is a Phosphothreonine. The segment at 552–576 (DDEDEDGDDLLHHHHGSHCSSSGDP) is disordered. Phosphoserine occurs at positions 568 and 571. K597 is covalently cross-linked (Glycyl lysine isopeptide (Lys-Gly) (interchain with G-Cter in SUMO2); alternate). A Glycyl lysine isopeptide (Lys-Gly) (interchain with G-Cter in SUMO1); alternate cross-link involves residue K597. The disordered stretch occupies residues 598 to 619 (ASASGSGAQVGGPISSGSSASS). Residues S612, S613, S616, and S619 each carry the phosphoserine modification. 2 O-linked (GlcNAc) serine glycosylation sites follow: S625 and S628. Residues S628, S632, S636, and S652 each carry the phosphoserine modification. Residues 647–661 (LLGNSSPRTQSPQNC) constitute a propeptide, removed in Lamin-A/C form. C661 is subject to Cysteine methyl ester. Residue C661 is the site of S-farnesyl cysteine attachment. Residues 662–664 (SIM) constitute a propeptide, removed in Prelamin-A/C form and in Lamin-A/C form.

The protein belongs to the intermediate filament family. As to quaternary structure, homodimer of lamin A and lamin C. Lamin dimers then assemble into dimeric head-to-tail polymers. Ultimately, two head-to-tail polymers assemble laterally into a protofilament with a uniformly shaped rod of 3.5 nm in diameter. Interacts with lamin-associated polypeptides IA, IB and TMPO-alpha, RB1 and with emerin. Interacts with SREBF1, SREBF2, SUN2 and TMEM43. Interacts with TMEM201. Proteolytically processed isoform A interacts with NARF. Interacts with SUN1. Interacts with MLIP. Interacts with DMPK; may regulate nuclear envelope stability. Interacts with SUV39H1; the interaction increases stability of SUV39H1. Interacts with SYNE2. Interacts with ITSN1 isoform 2. Interacts with IFFO1; enables the formation of an interior nucleoskeleton that is recruited to DNA double-strand breaks. In terms of assembly, interacts with EMD. Interacts (via C-terminus) with LEMD2 (via N-terminus) (in vitro). Post-translationally, proteolytic cleavage of the C-terminal of 18 residues of prelamin-A/C results in the production of lamin-A/C. The prelamin-A/C maturation pathway includes farnesylation of CAAX motif by protein farnesyltransferase (FNTA and FNTB), removal of the last three amino acids (-AAX) by RCE1/FACE2 and/or ZMPSTE24, methylation of the C-terminal cysteine by ICMT and endoproteolytic removal of the last 15 C-terminal amino acids by ZMPSTE24. Proteolytic cleavage requires prior farnesylation and methylation, and absence of these blocks cleavage. Farnesylation of prelamin-A/C facilitates nuclear envelope targeting. In terms of processing, phosphorylation plays a key role in lamin organization, subcellular localization and nuclear envelope disintegration. Phosphorylation by CDK1 at Ser-22 and Ser-392 at the onset of mitosis drives lamin disassembly and nuclear envelope breakdown. Phosphorylation at Ser-22 and Ser-392 during interphase promotes localization to the nucleoplasm and regulates lamina assembly. Phosphorylation at Ser-22, Ser-392 and Ser-628 during interphase causes redistribution between the nucleus and the cytoplasm. Phosphorylation at Ser-22 by CDK1 regulates matrix stiffness. Phosphorylation status of Ser-22 determines its localization between double-strand break (DSB) sites and the nuclear matrix. Phosphorylated by ATR at Ser-282 in response to DNA damage, leading to lamin disassembly and nuclear envelope rupture. Phosphorylation also regulates stability in micronuclei arising from genome instability: phosphorylation at Ser-395 by ATR in response to genome instability and double-stranded DNA breaks primes LMNA for subsequent phosphorylation at Ser-392 by CDK1 and micronuclei envelope rupture. The rupture of micronuclear envelope triggers the cGAS-STING pathway thereby activating the type I interferon response and innate immunity. Post-translationally, acetylation by KAT8 is required for nuclear architecture. Sumoylation is necessary for the localization to the nuclear envelope. As to expression, in the arteries, prelamin-A/C accumulation is not observed in young healthy vessels but is prevalent in medial vascular smooth muscle cells (VSMCs) from aged individuals and in atherosclerotic lesions, where it often colocalizes with senescent and degenerate VSMCs. Prelamin-A/C expression increases with age and disease. In normal aging, the accumulation of prelamin-A/C is caused in part by the down-regulation of ZMPSTE24/FACE1 in response to oxidative stress.

The protein resides in the nucleus lamina. The protein localises to the nucleus envelope. Its subcellular location is the nucleus. It is found in the nucleoplasm. It localises to the nucleus matrix. The protein resides in the nucleus speckle. In terms of biological role, lamins are intermediate filament proteins that assemble into a filamentous meshwork, and which constitute the major components of the nuclear lamina, a fibrous layer on the nucleoplasmic side of the inner nuclear membrane. Lamins provide a framework for the nuclear envelope, bridging the nuclear envelope and chromatin, thereby playing an important role in nuclear assembly, chromatin organization, nuclear membrane and telomere dynamics. Lamin A and C also regulate matrix stiffness by conferring nuclear mechanical properties. The structural integrity of the lamina is strictly controlled by the cell cycle, as seen by the disintegration and formation of the nuclear envelope in prophase and telophase, respectively. Lamin A and C are present in equal amounts in the lamina of mammals. Also invoved in DNA repair: recruited by DNA repair proteins XRCC4 and IFFO1 to the DNA double-strand breaks (DSBs) to prevent chromosome translocation by immobilizing broken DNA ends. Required for normal development of peripheral nervous system and skeletal muscle and for muscle satellite cell proliferation. Required for osteoblastogenesis and bone formation. Also prevents fat infiltration of muscle and bone marrow, helping to maintain the volume and strength of skeletal muscle and bone. Required for cardiac homeostasis. Its function is as follows. Prelamin-A/C can accelerate smooth muscle cell senescence. It acts to disrupt mitosis and induce DNA damage in vascular smooth muscle cells (VSMCs), leading to mitotic failure, genomic instability, and premature senescence. In Homo sapiens (Human), this protein is Prelamin-A/C (LMNA).